A 501-amino-acid polypeptide reads, in one-letter code: MELHNDEKRLLKAFQDSNKKIMNLEELSEYIEKEKVMRAAFWLSGRDFLEIIENKTRVCELTELGKNSLDSEIPERKVANYIKENNLESIPIKDLSKILEKDETGAALGNLKKKELVTIDKGNIVFKNLDYKDNEEEVLKKVSEDFNLSNYSEDEVKIIENLKKRGFLKINEVVDRSFELKSAGIDFIKNPIEIKEEITQLTREMIVSGKWNDYTIRPYDAKIPTEEIYPVKAHPMSKIIQEVNEVLISMGFKEVKSQIVQTEFWNFDTLFEPQDHPARDMQDTFFVKYPNTGIVPKDLLEKVKGIHECGTIGSEKISKGWCYKFDEKVSERTVLRTHTTVSSIKYLASLSETERENPQKVFCIDRVFRNETIDYKHLPEFYQCEGIVMAEDVNFDNLVGVLKEFLRKLGFEKVRIRPAYFPFTEPSLEAEVYMEGKGWLELLGAGVFRPEVLEPFGIKKPVLAWGIGLSRLAMLRLGLTDIRELHKNDIEWLKKTAVSEK.

Residues Thr340 and Phe423 each contribute to the L-phenylalanine site. Glu425 serves as a coordination point for Mg(2+). An L-phenylalanine-binding site is contributed by Phe448.

This sequence belongs to the class-II aminoacyl-tRNA synthetase family. Phe-tRNA synthetase alpha subunit type 2 subfamily. As to quaternary structure, tetramer of two alpha and two beta subunits. The cofactor is Mg(2+).

The protein localises to the cytoplasm. It catalyses the reaction tRNA(Phe) + L-phenylalanine + ATP = L-phenylalanyl-tRNA(Phe) + AMP + diphosphate + H(+). This Methanococcus maripaludis (strain C7 / ATCC BAA-1331) protein is Phenylalanine--tRNA ligase alpha subunit.